The primary structure comprises 340 residues: MTVSPTTQPQTNHSLPPADAKQRVSQFMQTLQDEICQGLEALDGKGKFQEDSWQREEGGGGRSRVLADGDFLEQGGVNFSEVWGKSLPPSILKQRPEAEGHEFYATGTSMVLHPKNPYIPTVHLNYRYFEAGPVWWFGGGADLTPYYPFAEDAAHFHHTLKNACDQTHGEFYPVFKRWCDEYFYLKHRQEMRGIGGIFFDYQDGNAPLYRGPDPNGPAAQYSNQLAPIEPLGWEDLFSFAQRCGRAFLPAYSPIVEKRRNTEYGDRQRQFQLYRRGRYVEFNLVYDRGTIFGLQTNGRTESILMSLPPLVRWQYCYSPEAGSPEAELTEKFLVPQDWVNS.

The segment covering 1-14 has biased composition (polar residues); that stretch reads MTVSPTTQPQTNHS. The segment at 1–22 is disordered; sequence MTVSPTTQPQTNHSLPPADAKQ. S109 provides a ligand contact to substrate. Residues H113 and H123 each coordinate a divalent metal cation. The active-site Proton donor is H123. 125 to 127 provides a ligand contact to substrate; the sequence is NYR. The a divalent metal cation site is built by H157 and H187. The tract at residues 278–313 is important for dimerization; sequence YVEFNLVYDRGTIFGLQTNGRTESILMSLPPLVRWQ. 296-298 is a binding site for substrate; it reads NGR.

Belongs to the aerobic coproporphyrinogen-III oxidase family. In terms of assembly, homodimer. Requires a divalent metal cation as cofactor.

The protein localises to the cytoplasm. The catalysed reaction is coproporphyrinogen III + O2 + 2 H(+) = protoporphyrinogen IX + 2 CO2 + 2 H2O. Its pathway is porphyrin-containing compound metabolism; protoporphyrin-IX biosynthesis; protoporphyrinogen-IX from coproporphyrinogen-III (O2 route): step 1/1. Its function is as follows. Involved in the heme and chlorophyll biosynthesis. Catalyzes the aerobic oxidative decarboxylation of propionate groups of rings A and B of coproporphyrinogen-III to yield the vinyl groups in protoporphyrinogen-IX. The sequence is that of Oxygen-dependent coproporphyrinogen-III oxidase from Synechocystis sp. (strain ATCC 27184 / PCC 6803 / Kazusa).